Reading from the N-terminus, the 354-residue chain is 3-dehydroquinate synthase (354 aa).

NAD(+)-binding positions include 100 to 104 (GATGD), 124 to 125 (TT), lysine 136, lysine 145, and 163 to 166 (FLKT). Zn(2+)-binding residues include glutamate 178, histidine 242, and histidine 256.

Belongs to the sugar phosphate cyclases superfamily. Dehydroquinate synthase family. The cofactor is NAD(+). Requires Co(2+) as cofactor. It depends on Zn(2+) as a cofactor.

It localises to the cytoplasm. It catalyses the reaction 7-phospho-2-dehydro-3-deoxy-D-arabino-heptonate = 3-dehydroquinate + phosphate. It functions in the pathway metabolic intermediate biosynthesis; chorismate biosynthesis; chorismate from D-erythrose 4-phosphate and phosphoenolpyruvate: step 2/7. Its function is as follows. Catalyzes the conversion of 3-deoxy-D-arabino-heptulosonate 7-phosphate (DAHP) to dehydroquinate (DHQ). The protein is 3-dehydroquinate synthase of Staphylococcus aureus (strain MSSA476).